Consider the following 169-residue polypeptide: MSDHKRAVLAGGCFWGMQDLIRKQPGVVSTRVGYTGGQNDHPTYRNHPGHAEAIEIVYDPAQTDYRALLEFFFQIHDPTTKNRQGNDVGTSYRSEIFYVDDEQRRIALDTIADVDASGLWPGKVVTDVSPAPEFWEAEPEHQDYLERYPSGYTCHFPRPGWKLPKRAEV.

Cysteine 13 is an active-site residue.

Belongs to the MsrA Met sulfoxide reductase family.

The enzyme catalyses L-methionyl-[protein] + [thioredoxin]-disulfide + H2O = L-methionyl-(S)-S-oxide-[protein] + [thioredoxin]-dithiol. It catalyses the reaction [thioredoxin]-disulfide + L-methionine + H2O = L-methionine (S)-S-oxide + [thioredoxin]-dithiol. Its function is as follows. Has an important function as a repair enzyme for proteins that have been inactivated by oxidation. Catalyzes the reversible oxidation-reduction of methionine sulfoxide in proteins to methionine. This chain is Peptide methionine sulfoxide reductase MsrA, found in Mycolicibacterium vanbaalenii (strain DSM 7251 / JCM 13017 / BCRC 16820 / KCTC 9966 / NRRL B-24157 / PYR-1) (Mycobacterium vanbaalenii).